We begin with the raw amino-acid sequence, 272 residues long: 2-dehydro-3-deoxyphosphooctonate aldolase (272 aa).

It belongs to the KdsA family.

Its subcellular location is the cytoplasm. It carries out the reaction D-arabinose 5-phosphate + phosphoenolpyruvate + H2O = 3-deoxy-alpha-D-manno-2-octulosonate-8-phosphate + phosphate. It participates in carbohydrate biosynthesis; 3-deoxy-D-manno-octulosonate biosynthesis; 3-deoxy-D-manno-octulosonate from D-ribulose 5-phosphate: step 2/3. Its pathway is bacterial outer membrane biogenesis; lipopolysaccharide biosynthesis. This is 2-dehydro-3-deoxyphosphooctonate aldolase from Geotalea daltonii (strain DSM 22248 / JCM 15807 / FRC-32) (Geobacter daltonii).